The sequence spans 385 residues: Succinyl-diaminopimelate desuccinylase (385 aa).

Position 73 (H73) interacts with Zn(2+). D75 is a catalytic residue. Position 106 (D106) interacts with Zn(2+). E141 acts as the Proton acceptor in catalysis. Positions 142, 170, and 359 each coordinate Zn(2+).

This sequence belongs to the peptidase M20A family. DapE subfamily. As to quaternary structure, homodimer. Requires Zn(2+) as cofactor. Co(2+) is required as a cofactor.

It carries out the reaction N-succinyl-(2S,6S)-2,6-diaminopimelate + H2O = (2S,6S)-2,6-diaminopimelate + succinate. The protein operates within amino-acid biosynthesis; L-lysine biosynthesis via DAP pathway; LL-2,6-diaminopimelate from (S)-tetrahydrodipicolinate (succinylase route): step 3/3. In terms of biological role, catalyzes the hydrolysis of N-succinyl-L,L-diaminopimelic acid (SDAP), forming succinate and LL-2,6-diaminopimelate (DAP), an intermediate involved in the bacterial biosynthesis of lysine and meso-diaminopimelic acid, an essential component of bacterial cell walls. The chain is Succinyl-diaminopimelate desuccinylase from Methylorubrum extorquens (strain CM4 / NCIMB 13688) (Methylobacterium extorquens).